The chain runs to 345 residues: Ninja-family protein AFP1 (345 aa).

Disordered regions lie at residues 114–185 (TSLP…ATAN) and 201–256 (QVSG…RRLS). Composition is skewed to basic and acidic residues over residues 123–132 (EWRKRKEMQT) and 222–232 (LETKASSDEAR). Positions 235–249 (PSTTQPQQETTTKPT) are enriched in low complexity.

This sequence belongs to the Ninja family. In terms of assembly, forms a heterodimer with AFP2. Interacts with ABI5/DPBF1, DPBF2, AREB3/DPBF3, ABF1, ABF3/DPBF5 and ABF4/AREB2.

Its subcellular location is the nucleus. Its function is as follows. Acts as a negative regulator of abscisic acid (ABA) response during germination through the ubiquitin-mediated proteolysis of ABI5/DPBF1. The chain is Ninja-family protein AFP1 (AFP1) from Arabidopsis thaliana (Mouse-ear cress).